A 258-amino-acid polypeptide reads, in one-letter code: Protease HtpX homolog (258 aa).

The next 2 membrane-spanning stretches (helical) occupy residues 24–44 (VLLFGLIYAILMVVGSILGLG) and 45–65 (GPLFYALLGFGVIFLQYLISP). H146 is a Zn(2+) binding site. E147 is an active-site residue. H150 serves as a coordination point for Zn(2+). 2 consecutive transmembrane segments (helical) span residues 157–177 (IVMTLVSAVPLICYYIFWSTV) and 186–206 (LVGIAALIAYFIGQLIVLFIS). E210 is a Zn(2+) binding site.

This sequence belongs to the peptidase M48B family. Zn(2+) serves as cofactor.

It localises to the cell membrane. In Methanothermobacter thermautotrophicus (strain ATCC 29096 / DSM 1053 / JCM 10044 / NBRC 100330 / Delta H) (Methanobacterium thermoautotrophicum), this protein is Protease HtpX homolog.